The chain runs to 180 residues: Colicin-E5 (180 aa).

Disordered regions lie at residues alanine 24–glycine 143 and valine 155–glutamine 180. The segment covering glutamate 54–lysine 76 has biased composition (basic and acidic residues). The interval leucine 74–glutamine 180 is nuclease. Residues asparagine 106–serine 116 show a composition bias toward polar residues. Over residues aspartate 160 to arginine 171 the composition is skewed to basic and acidic residues.

The protein belongs to the colicin/pyosin nuclease family.

Functionally, colicins are polypeptide toxins produced by and active against E.coli and closely related bacteria. This colicin is an endonuclease. This chain is Colicin-E5 (col), found in Escherichia coli.